The following is a 95-amino-acid chain: Large ribosomal subunit protein uL23 (95 aa).

It belongs to the universal ribosomal protein uL23 family. In terms of assembly, contacts protein L29, and trigger factor when it is bound to the ribosome. Part of the 50S ribosomal subunit.

Its function is as follows. One of the early assembly proteins it binds 23S rRNA. One of the proteins that surrounds the polypeptide exit tunnel on the outside of the ribosome. Forms the main docking site for trigger factor binding to the ribosome. In Geobacillus stearothermophilus (Bacillus stearothermophilus), this protein is Large ribosomal subunit protein uL23.